The following is a 594-amino-acid chain: UvrABC system protein C (594 aa).

Positions 14 to 91 constitute a GIY-YIG domain; it reads DSPGCYLHKD…IQENMPKYNI (78 aa). Residues 196–231 enclose the UVR domain; that stretch reads DKIIDDLRSKMLEASHNQEFERAAEYRDLISGIATM.

It belongs to the UvrC family. In terms of assembly, interacts with UvrB in an incision complex.

Its subcellular location is the cytoplasm. Its function is as follows. The UvrABC repair system catalyzes the recognition and processing of DNA lesions. UvrC both incises the 5' and 3' sides of the lesion. The N-terminal half is responsible for the 3' incision and the C-terminal half is responsible for the 5' incision. The protein is UvrABC system protein C of Streptococcus equi subsp. equi (strain 4047).